An 89-amino-acid polypeptide reads, in one-letter code: Small ribosomal subunit protein uS15 (89 aa).

Belongs to the universal ribosomal protein uS15 family. Part of the 30S ribosomal subunit. Forms a bridge to the 50S subunit in the 70S ribosome, contacting the 23S rRNA.

Functionally, one of the primary rRNA binding proteins, it binds directly to 16S rRNA where it helps nucleate assembly of the platform of the 30S subunit by binding and bridging several RNA helices of the 16S rRNA. In terms of biological role, forms an intersubunit bridge (bridge B4) with the 23S rRNA of the 50S subunit in the ribosome. This Colwellia psychrerythraea (strain 34H / ATCC BAA-681) (Vibrio psychroerythus) protein is Small ribosomal subunit protein uS15.